The sequence spans 680 residues: PAN2-PAN3 deadenylation complex subunit PAN3 (680 aa).

Disordered regions lie at residues 1-26 (MATT…RADT), 51-87 (HDQT…SKKT), and 99-120 (FTPR…TDIP). The segment at 25–54 (DTKDTLCRNILIYGHCRYEDAGCAFNHDQT) adopts a C3H1-type zinc-finger fold. The span at 52–64 (DQTKKSPKPDATT) shows a compositional bias: basic and acidic residues. Positions 62–82 (ATTRKTLNVDSAPFTPAVSSQ) match the PABPC-interacting motif-2 (PAM-2) motif. A compositionally biased stretch (low complexity) spans 99 to 117 (FTPRATAATPTGTPTAQET). Residues 256 to 522 (QTMTGTAALQ…TVKNLVAGIN (267 aa)) form a pseudokinase domain region. ATP-binding positions include arginine 311, 360–367 (EYYPLAET), and 422–423 (TK). A coiled-coil region spans residues 523 to 561 (EHVMTAFDAQQRQSDMLYSELYREVENGRVLRLLMKLAT). The knob domain stretch occupies residues 562-680 (INERTEYDKD…VHHPSHRDRF (119 aa)). Gly residues predominate over residues 655–669 (SGNGRGGPVASGSGH). Residues 655 to 680 (SGNGRGGPVASGSGHGVHHPSHRDRF) are disordered. Over residues 670–680 (GVHHPSHRDRF) the composition is skewed to basic residues.

Belongs to the protein kinase superfamily. PAN3 family. As to quaternary structure, homodimer. Forms a heterotrimer with a catalytic subunit PAN2 to form the poly(A)-nuclease (PAN) deadenylation complex. Interacts (via PAM-2 motif) with poly(A)-binding protein PAB1 (via PABC domain), conferring substrate specificity of the enzyme complex.

Its subcellular location is the cytoplasm. Its function is as follows. Regulatory subunit of the poly(A)-nuclease (PAN) deadenylation complex, one of two cytoplasmic mRNA deadenylases involved in mRNA turnover. PAN specifically shortens poly(A) tails of RNA and the activity is stimulated by poly(A)-binding protein PAB1. PAN deadenylation is followed by rapid degradation of the shortened mRNA tails by the CCR4-NOT complex. Deadenylated mRNAs are then degraded by two alternative mechanisms, namely exosome-mediated 3'-5' exonucleolytic degradation, or deadenylation-dependent mRNA decaping and subsequent 5'-3' exonucleolytic degradation by XRN1. May also be involved in post-transcriptional maturation of mRNA poly(A) tails. PAN3 acts as a positive regulator for PAN activity, recruiting the catalytic subunit PAN2 to mRNA via its interaction with RNA and with PAB1. This is PAN2-PAN3 deadenylation complex subunit PAN3 from Pyricularia oryzae (strain 70-15 / ATCC MYA-4617 / FGSC 8958) (Rice blast fungus).